Reading from the N-terminus, the 220-residue chain is Ribonuclease HII (220 aa).

Residues 32–220 (KHIAGIDEAG…FAPIKGRFDC (189 aa)) form the RNase H type-2 domain. Positions 38, 39, and 130 each coordinate a divalent metal cation.

The protein belongs to the RNase HII family. Mn(2+) is required as a cofactor. It depends on Mg(2+) as a cofactor.

The protein localises to the cytoplasm. It carries out the reaction Endonucleolytic cleavage to 5'-phosphomonoester.. Its function is as follows. Endonuclease that specifically degrades the RNA of RNA-DNA hybrids. This Brucella canis (strain ATCC 23365 / NCTC 10854 / RM-666) protein is Ribonuclease HII.